Consider the following 525-residue polypeptide: GMP synthase [glutamine-hydrolyzing] (525 aa).

The Glutamine amidotransferase type-1 domain maps to 12-203 (TVLVVDFGAQ…LYRGAGLTPS (192 aa)). Catalysis depends on Cys89, which acts as the Nucleophile. Active-site residues include His177 and Glu179. One can recognise a GMPS ATP-PPase domain in the interval 204 to 399 (WTTGNVIDEQ…LGLPDEIVQR (196 aa)). 231–237 (SGGVDSA) is a binding site for ATP.

As to quaternary structure, homodimer.

The enzyme catalyses XMP + L-glutamine + ATP + H2O = GMP + L-glutamate + AMP + diphosphate + 2 H(+). The protein operates within purine metabolism; GMP biosynthesis; GMP from XMP (L-Gln route): step 1/1. Its function is as follows. Catalyzes the synthesis of GMP from XMP. The protein is GMP synthase [glutamine-hydrolyzing] of Streptomyces avermitilis (strain ATCC 31267 / DSM 46492 / JCM 5070 / NBRC 14893 / NCIMB 12804 / NRRL 8165 / MA-4680).